The following is a 297-amino-acid chain: T-cell leukemia homeobox protein 1 (297 aa).

A disordered region spans residues 153–174 (DRFTGHPYQNRTPPKKKKPRTS). The homeobox DNA-binding region spans 168 to 227 (KKKPRTSFTRLQICELEKRFHRQKYLASAERAALAKALKMTDAQVKTWFQNRRTKWRRQT).

The protein resides in the nucleus. Seems to be involved in the development of cranial sensory innervation from peripheral ganglia. This is T-cell leukemia homeobox protein 1 (TLX1) from Gallus gallus (Chicken).